We begin with the raw amino-acid sequence, 423 residues long: Imidazolonepropionase (423 aa).

2 residues coordinate Fe(3+): H87 and H89. Positions 87 and 89 each coordinate Zn(2+). Residues R96, Y159, and H192 each coordinate 4-imidazolone-5-propanoate. An N-formimidoyl-L-glutamate-binding site is contributed by Y159. Fe(3+) is bound at residue H257. H257 lines the Zn(2+) pocket. 4-imidazolone-5-propanoate is bound at residue E260. D331 contributes to the Fe(3+) binding site. D331 contributes to the Zn(2+) binding site. The N-formimidoyl-L-glutamate site is built by N333 and G335. Position 336 (S336) interacts with 4-imidazolone-5-propanoate.

Belongs to the metallo-dependent hydrolases superfamily. HutI family. Zn(2+) is required as a cofactor. The cofactor is Fe(3+).

Its subcellular location is the cytoplasm. It carries out the reaction 4-imidazolone-5-propanoate + H2O = N-formimidoyl-L-glutamate. The protein operates within amino-acid degradation; L-histidine degradation into L-glutamate; N-formimidoyl-L-glutamate from L-histidine: step 3/3. Its function is as follows. Catalyzes the hydrolytic cleavage of the carbon-nitrogen bond in imidazolone-5-propanoate to yield N-formimidoyl-L-glutamate. It is the third step in the universal histidine degradation pathway. The sequence is that of Imidazolonepropionase from Porphyromonas gingivalis (strain ATCC 33277 / DSM 20709 / CIP 103683 / JCM 12257 / NCTC 11834 / 2561).